Consider the following 155-residue polypeptide: Protein SprT-like (155 aa).

In terms of domain architecture, SprT-like spans 7–145 (QRHMEEVSLQ…GSCGGKLIQI (139 aa)). Position 67 (His-67) interacts with Zn(2+). The active site involves Glu-68. Zn(2+) is bound at residue His-71.

The protein belongs to the SprT family. It depends on Zn(2+) as a cofactor.

Its subcellular location is the cytoplasm. This chain is Protein SprT-like, found in Listeria monocytogenes serotype 4a (strain HCC23).